The sequence spans 188 residues: Elongation factor P-like protein (188 aa).

Belongs to the elongation factor P family.

The chain is Elongation factor P-like protein from Saccharophagus degradans (strain 2-40 / ATCC 43961 / DSM 17024).